The primary structure comprises 668 residues: Cyclin-dependent kinase 11.2 (668 aa).

The segment at 1-265 is disordered; that stretch reads MSNYSTNGSR…EQWESMTENE (265 aa). Basic and acidic residues-rich tracts occupy residues 35–73, 85–127, and 140–163; these read KTKE…DHRD, YCRD…DSLR, and LPDD…KTVM. Residues 164–181 are compositionally biased toward acidic residues; it reads EVEDVEMSPVEMLDEEEV. 2 stretches are compositionally biased toward basic and acidic residues: residues 197 to 212 and 245 to 265; these read NEPE…DPES and PDDK…TENE. A Protein kinase domain is found at 304-600; that stretch reads YVILNVIAEG…ASEALQHDWF (297 aa). Residues 310-318 and Lys333 each bind ATP; that span reads IAEGTYGEV. The active-site Proton acceptor is the Asp432.

The protein belongs to the protein kinase superfamily. CMGC Ser/Thr protein kinase family. CDC2/CDKX subfamily. In terms of tissue distribution, expressed in somatic cells and at varying levels throughout the germline (at protein level). Highly expressed in the germ line of hermaphrodites (at protein level).

It is found in the nucleus. It localises to the cytoplasm. It carries out the reaction L-seryl-[protein] + ATP = O-phospho-L-seryl-[protein] + ADP + H(+). It catalyses the reaction L-threonyl-[protein] + ATP = O-phospho-L-threonyl-[protein] + ADP + H(+). Functionally, probable cyclin-dependent kinase whose activity is most likely regulated by the cyclin cyl-1/Cylin-L. Acts partially redundantly with cdk-11.1 to ensure embryonic viability. In contrast to cdk-11.1, not essential for male and female fertility. The sequence is that of Cyclin-dependent kinase 11.2 from Caenorhabditis elegans.